Here is a 94-residue protein sequence, read N- to C-terminus: Co-chaperonin GroES (94 aa).

The protein belongs to the GroES chaperonin family. Heptamer of 7 subunits arranged in a ring. Interacts with the chaperonin GroEL.

Its subcellular location is the cytoplasm. In terms of biological role, together with the chaperonin GroEL, plays an essential role in assisting protein folding. The GroEL-GroES system forms a nano-cage that allows encapsulation of the non-native substrate proteins and provides a physical environment optimized to promote and accelerate protein folding. GroES binds to the apical surface of the GroEL ring, thereby capping the opening of the GroEL channel. This chain is Co-chaperonin GroES, found in Latilactobacillus sakei subsp. sakei (strain 23K) (Lactobacillus sakei subsp. sakei).